Reading from the N-terminus, the 159-residue chain is Globin D, coelomic (159 aa).

Gly2 bears the N-acetylglycine mark. The Globin domain maps to 12–158 (DLTPAEKDLI…VQGVLITKHA (147 aa)). The heme b site is built by His74 and His105.

The protein belongs to the globin family. In terms of assembly, homodimer.

This chain is Globin D, coelomic, found in Molpadia arenicola (Sea cucumber).